The sequence spans 401 residues: Aspartate aminotransferase, mitochondrial (401 aa).

At Thr-19 the chain carries Phosphothreonine. Residue Lys-30 is modified to N6-acetyllysine. Gly-36 provides a ligand contact to substrate. At Lys-44 the chain carries N6-acetyllysine; alternate. Lys-44 is modified (N6-succinyllysine; alternate). Lys-53 bears the N6-acetyllysine mark. Lys-61 carries the post-translational modification N6-acetyllysine; alternate. At Lys-61 the chain carries N6-succinyllysine; alternate. Residue Tyr-67 is modified to 3'-nitrotyrosine; alternate. Tyr-67 carries the phosphotyrosine; alternate modification. An N6-acetyllysine; alternate mark is found at Lys-78, Lys-93, and Lys-130. 3 positions are modified to N6-succinyllysine; alternate: Lys-78, Lys-93, and Lys-130. Substrate is bound at residue Trp-133. Position 156 is an N6-acetyllysine; alternate (Lys-156). At Lys-156 the chain carries N6-succinyllysine; alternate. A substrate-binding site is contributed by Asn-186. Residue Lys-198 is modified to N6-succinyllysine. At Lys-205 the chain carries N6-acetyllysine. Residues Lys-250 and Lys-267 each carry the N6-acetyllysine; alternate modification. Position 250 is an N6-(pyridoxal phosphate)lysine; alternate (Lys-250). The residue at position 267 (Lys-267) is an N6-succinyllysine; alternate. Position 273 is an N6-acetyllysine (Lys-273). The residue at position 280 (Lys-280) is an N6-acetyllysine; alternate. At Lys-280 the chain carries N6-succinyllysine; alternate. Arg-284 bears the Asymmetric dimethylarginine mark. Lys-309 bears the N6-acetyllysine; alternate mark. An N6-succinyllysine; alternate modification is found at Lys-309. An N6-acetyllysine modification is found at Lys-316. Lys-334 carries the N6-acetyllysine; alternate modification. An N6-succinyllysine; alternate modification is found at Lys-334. N6-acetyllysine occurs at positions 335 and 358. N6-acetyllysine; alternate is present on residues Lys-367 and Lys-375. Lys-367 and Lys-375 each carry N6-succinyllysine; alternate. Arg-378 contacts substrate.

Belongs to the class-I pyridoxal-phosphate-dependent aminotransferase family. In terms of assembly, homodimer. Pyridoxal 5'-phosphate serves as cofactor.

It is found in the mitochondrion matrix. It localises to the cell membrane. The enzyme catalyses L-aspartate + 2-oxoglutarate = oxaloacetate + L-glutamate. It carries out the reaction L-kynurenine + 2-oxoglutarate = kynurenate + L-glutamate + H2O. Catalyzes the irreversible transamination of the L-tryptophan metabolite L-kynurenine to form kynurenic acid (KA). As a member of the malate-aspartate shuttle, it has a key role in the intracellular NAD(H) redox balance. Is important for metabolite exchange between mitochondria and cytosol, and for amino acid metabolism. Facilitates cellular uptake of long-chain free fatty acids. This is Aspartate aminotransferase, mitochondrial (GOT2) from Equus caballus (Horse).